A 647-amino-acid chain; its full sequence is Threonine--tRNA ligase (647 aa).

The TGS domain occupies 1-61 (MIKITFPDGA…EEDGSIEIVT (61 aa)). The catalytic stretch occupies residues 240–538 (DHRKLGKELD…LIETYKGAFP (299 aa)). Positions 334, 385, and 515 each coordinate Zn(2+).

This sequence belongs to the class-II aminoacyl-tRNA synthetase family. Homodimer. Zn(2+) is required as a cofactor.

It is found in the cytoplasm. The catalysed reaction is tRNA(Thr) + L-threonine + ATP = L-threonyl-tRNA(Thr) + AMP + diphosphate + H(+). Catalyzes the attachment of threonine to tRNA(Thr) in a two-step reaction: L-threonine is first activated by ATP to form Thr-AMP and then transferred to the acceptor end of tRNA(Thr). Also edits incorrectly charged L-seryl-tRNA(Thr). The protein is Threonine--tRNA ligase of Streptococcus pyogenes serotype M2 (strain MGAS10270).